The following is a 147-amino-acid chain: Globin, major monomeric component (147 aa).

One can recognise a Globin domain in the interval 1–146 (GLSAAQRQVI…ISGALISGLQ (146 aa)). Position 90 (His-90) interacts with heme b.

Belongs to the globin family. In terms of assembly, monomer.

The sequence is that of Globin, major monomeric component from Glycera dibranchiata (Bloodworm).